The sequence spans 245 residues: DNA repair protein RecO (245 aa).

It belongs to the RecO family.

In terms of biological role, involved in DNA repair and RecF pathway recombination. In Porphyromonas gingivalis (strain ATCC BAA-308 / W83), this protein is DNA repair protein RecO.